Reading from the N-terminus, the 119-residue chain is uncharacterized protein (119 aa).

The segment at 64 to 119 is disordered; sequence SAPLGLKEVQKKSNEGLNEVQGAADINKQKRPANSQDSSSVEGDIQNFLEKVTGKN. Residues 95–104 are compositionally biased toward polar residues; the sequence is PANSQDSSSV.

This is an uncharacterized protein from Nostoc sp. (strain PCC 7120 / SAG 25.82 / UTEX 2576).